A 377-amino-acid polypeptide reads, in one-letter code: Succinyl-diaminopimelate desuccinylase (377 aa).

His67 contributes to the Zn(2+) binding site. Residue Asp69 is part of the active site. Asp100 contributes to the Zn(2+) binding site. Residue Glu134 is the Proton acceptor of the active site. Glu135, Glu163, and His349 together coordinate Zn(2+).

The protein belongs to the peptidase M20A family. DapE subfamily. As to quaternary structure, homodimer. The cofactor is Zn(2+). Requires Co(2+) as cofactor.

It carries out the reaction N-succinyl-(2S,6S)-2,6-diaminopimelate + H2O = (2S,6S)-2,6-diaminopimelate + succinate. Its pathway is amino-acid biosynthesis; L-lysine biosynthesis via DAP pathway; LL-2,6-diaminopimelate from (S)-tetrahydrodipicolinate (succinylase route): step 3/3. Its function is as follows. Catalyzes the hydrolysis of N-succinyl-L,L-diaminopimelic acid (SDAP), forming succinate and LL-2,6-diaminopimelate (DAP), an intermediate involved in the bacterial biosynthesis of lysine and meso-diaminopimelic acid, an essential component of bacterial cell walls. The sequence is that of Succinyl-diaminopimelate desuccinylase from Haemophilus influenzae (strain 86-028NP).